We begin with the raw amino-acid sequence, 131 residues long: uncharacterized protein (131 aa).

This is an uncharacterized protein from Rickettsia conorii (strain ATCC VR-613 / Malish 7).